A 705-amino-acid chain; its full sequence is Polyribonucleotide nucleotidyltransferase (705 aa).

Mg(2+)-binding residues include Asp-486 and Asp-492. Residues 553 to 612 (PRIHTMKVSQDKIRDIIGKGGATIRQLTEETGTTIEIEDDGTVKIAATSGEQAEDAINRI) enclose the KH domain. An S1 motif domain is found at 622 to 690 (GTLYTGKVVR…RQGRVRLSIK (69 aa)).

It belongs to the polyribonucleotide nucleotidyltransferase family. As to quaternary structure, component of the RNA degradosome, which is a multiprotein complex involved in RNA processing and mRNA degradation. It depends on Mg(2+) as a cofactor.

The protein localises to the cytoplasm. The enzyme catalyses RNA(n+1) + phosphate = RNA(n) + a ribonucleoside 5'-diphosphate. Involved in mRNA degradation. Catalyzes the phosphorolysis of single-stranded polyribonucleotides processively in the 3'- to 5'-direction. The polypeptide is Polyribonucleotide nucleotidyltransferase (Colwellia psychrerythraea (strain 34H / ATCC BAA-681) (Vibrio psychroerythus)).